A 693-amino-acid polypeptide reads, in one-letter code: Pentatricopeptide repeat-containing protein At2g19280 (693 aa).

PPR repeat units follow at residues 200-234 (LETVFSILIDCCIRERKVNMALKLTYKVDQFGIFP), 235-269 (SRGVCISLLKEILRVHGLELAREFVEHMLSRGRHL), 270-304 (NAAVLSLFIRKYCSDGYFDKGWELLMGMKHYGIRP), 305-339 (DIVAFTVFIDKLCKAGFLKEATSVLFKLKLFGISQ), 340-370 (DSVSVSSVIDGFCKVGKPEEAIKLIHSFRLR), 372-406 (NIFVYSSFLSNICSTGDMLRASTIFQEIFELGLLP), 407-441 (DCVCYTTMIDGYCNLGRTDKAFQYFGALLKSGNPP), 442-476 (SLTTSTILIGACSRFGSISDAESVFRNMKTEGLKL), 477-511 (DVVTYNNLMHGYGKTHQLNKVFELIDEMRSAGISP), 512-546 (DVATYNILIHSMVVRGYIDEANEIISELIRRGFVP), 547-581 (STLAFTDVIGGFSKRGDFQEAFILWFYMADLRMKP), 582-616 (DVVTCSALLHGYCKAQRMEKAIVLFNKLLDAGLKP), and 617-651 (DVVLYNTLIHGYCSVGDIEKACELIGLMVQRGMLP).

It belongs to the PPR family. P subfamily.

The protein is Pentatricopeptide repeat-containing protein At2g19280 of Arabidopsis thaliana (Mouse-ear cress).